Here is a 421-residue protein sequence, read N- to C-terminus: BEN domain-containing protein 5 (421 aa).

At lysine 133 the chain carries N6-acetyllysine. A coiled-coil region spans residues 180–243 (RALYEELLRN…LNRRLQDVLL (64 aa)). Residue lysine 258 forms a Glycyl lysine isopeptide (Lys-Gly) (interchain with G-Cter in SUMO2) linkage. One can recognise a BEN domain in the interval 302 to 408 (GSGIWVDEEK…EKIMDINKSC (107 aa)).

Its function is as follows. Acts as a transcriptional repressor. In Homo sapiens (Human), this protein is BEN domain-containing protein 5 (BEND5).